The primary structure comprises 257 residues: 3-deoxy-manno-octulosonate cytidylyltransferase (257 aa).

This sequence belongs to the KdsB family.

It is found in the cytoplasm. It carries out the reaction 3-deoxy-alpha-D-manno-oct-2-ulosonate + CTP = CMP-3-deoxy-beta-D-manno-octulosonate + diphosphate. It functions in the pathway nucleotide-sugar biosynthesis; CMP-3-deoxy-D-manno-octulosonate biosynthesis; CMP-3-deoxy-D-manno-octulosonate from 3-deoxy-D-manno-octulosonate and CTP: step 1/1. The protein operates within bacterial outer membrane biogenesis; lipopolysaccharide biosynthesis. Its function is as follows. Activates KDO (a required 8-carbon sugar) for incorporation into bacterial lipopolysaccharide in Gram-negative bacteria. The sequence is that of 3-deoxy-manno-octulosonate cytidylyltransferase from Xylella fastidiosa (strain M12).